The primary structure comprises 216 residues: Pyridoxine/pyridoxamine 5'-phosphate oxidase 1 (216 aa).

Substrate is bound by residues 10-13 (RREY) and Lys68. FMN-binding positions include 63-68 (RIVLLK), 78-79 (YT), Lys85, and Gln107. Positions 125, 129, and 133 each coordinate substrate. FMN-binding positions include 142-143 (QS) and Trp186. Substrate is bound at residue 192 to 194 (RLH). Arg196 serves as a coordination point for FMN.

It belongs to the pyridoxamine 5'-phosphate oxidase family. Homodimer. FMN is required as a cofactor.

The enzyme catalyses pyridoxamine 5'-phosphate + O2 + H2O = pyridoxal 5'-phosphate + H2O2 + NH4(+). The catalysed reaction is pyridoxine 5'-phosphate + O2 = pyridoxal 5'-phosphate + H2O2. It functions in the pathway cofactor metabolism; pyridoxal 5'-phosphate salvage; pyridoxal 5'-phosphate from pyridoxamine 5'-phosphate: step 1/1. Its pathway is cofactor metabolism; pyridoxal 5'-phosphate salvage; pyridoxal 5'-phosphate from pyridoxine 5'-phosphate: step 1/1. Catalyzes the oxidation of either pyridoxine 5'-phosphate (PNP) or pyridoxamine 5'-phosphate (PMP) into pyridoxal 5'-phosphate (PLP). This Hydrogenovibrio crunogenus (strain DSM 25203 / XCL-2) (Thiomicrospira crunogena) protein is Pyridoxine/pyridoxamine 5'-phosphate oxidase 1.